Reading from the N-terminus, the 62-residue chain is Alpha-lytic protease L1 (62 aa).

Ser-48 (charge relay system) is an active-site residue.

Belongs to the peptidase S1 family. As to quaternary structure, monomer.

The protein localises to the secreted. The enzyme catalyses Preferential cleavage: Ala-|-Xaa, Val-|-Xaa in bacterial cell walls, elastin and other proteins.. Its activity is regulated as follows. Inhibited by phenylmethanesulfonyl fluoride (PMSF) and p-chloromercuribenzoate (PCMB). In terms of biological role, has bacteriolytic activity. The protein is Alpha-lytic protease L1 of Lysobacter sp. (strain XL1).